We begin with the raw amino-acid sequence, 839 residues long: MAPKRKRPATKDDTTKSIPKPKKRAPKRAKTVKEEPVTVVEEGEKHVARFLDEPIPESEAKSTWPDRYKPIEVQPPKASSRKKTKDDEKVEIIRARCHYRRAIVDERQIYELNDDAYVQSGEGKDPFICKIIEMFEGANGKLYFTARWFYRPSDTVMKEFEILIKKKRVFFSEIQDTNELGLLEKKLNILMIPLNENTKETIPATENCDFFCDMNYFLPYDTFEAIQQETMMAISESSTISSDTDIREGAAAISEIGECSQETEGHKKATLLDLYSGCGAMSTGLCMGAQLSGLNLVTKWAVDMNAHACKSLQHNHPETNVRNMTAEDFLFLLKEWEKLCIHFSLRNSPNSEEYANLHGLNNVEDNEDVSEESENEDDGEVFTVDKIVGISFGVPKKLLKRGLYLKVRWLNYDDSHDTWEPIEGLSNCRGKIEEFVKLGYKSGILPLPGGVDVVCGGPPCQGISGHNRFRNLLDPLEDQKNKQLLVYMNIVEYLKPKFVLMENVVDMLKMAKGYLARFAVGRLLQMNYQVRNGMMAAGAYGLAQFRLRFFLWGALPSEIIPQFPLPTHDLVHRGNIVKEFQGNIVAYDEGHTVKLADKLLLKDVISDLPAVANSEKRDEITYDKDPTTPFQKFIRLRKDEASGSQSKSKSKKHVLYDHHPLNLNINDYERVCQVPKRKGANFRDFPGVIVGPGNVVKLEEGKERVKLESGKTLVPDYALTYVDGKSCKPFGRLWWDEIVPTVVTRAEPHNQVIIHPEQNRVLSIRENARLQGFPDDYKLFGPPKQKYIQVGNAVAVPVAKALGYALGTAFQGLAVGKDPLLTLPEGFAFMKPTLPSELA.

Disordered stretches follow at residues 1–38 and 51–86; these read MAPK…EPVT and LDEP…KTKD. A compositionally biased stretch (basic residues) spans 19 to 30; that stretch reads PKPKKRAPKRAK. The segment covering 51 to 70 has biased composition (basic and acidic residues); sequence LDEPIPESEAKSTWPDRYKP. Residues 108 to 227 form the BAH domain; the sequence is QIYELNDDAY…LPYDTFEAIQ (120 aa). The SAM-dependent MTase C5-type domain occupies 269–813; it reads ATLLDLYSGC…YALGTAFQGL (545 aa). The Chromo domain maps to 382-447; that stretch reads FTVDKIVGIS…LGYKSGILPL (66 aa). Cys460 is a catalytic residue.

It belongs to the class I-like SAM-binding methyltransferase superfamily. C5-methyltransferase family. In terms of assembly, homodimer. Interacts with HP1 and, through its chromodomain, with the N-terminal tail of histone H3 doubly methylated at 'Lys-9' and 'Lys-27'. Binds to JMJ24. In terms of processing, ubiquitinated by JMJ24, subsequently beingargeted to proteasomal degradation thus initiating the destabilization of the heterochromatic state of endogenous silenced loci.

The protein localises to the nucleus. The catalysed reaction is a 2'-deoxycytidine in DNA + S-adenosyl-L-methionine = a 5-methyl-2'-deoxycytidine in DNA + S-adenosyl-L-homocysteine + H(+). Functionally, involved in the CpXpG methylation (e.g. CHG cytosine) and in gene silencing. Methylates preferentially transposon-related sequences. Functionally redundant to DRM1/DRM2 to maintain non-CpG methylation. Involved in RNA-directed DNA methylation. The sequence is that of DNA (cytosine-5)-methyltransferase CMT3 from Arabidopsis thaliana (Mouse-ear cress).